The primary structure comprises 257 residues: 3-dehydroquinate dehydratase (257 aa).

Residues 50–52 (EWR) and arginine 86 each bind 3-dehydroquinate. Catalysis depends on histidine 147, which acts as the Proton donor/acceptor. Catalysis depends on lysine 174, which acts as the Schiff-base intermediate with substrate. 3-dehydroquinate contacts are provided by arginine 216, serine 235, and glutamine 239.

It belongs to the type-I 3-dehydroquinase family. Homodimer.

It carries out the reaction 3-dehydroquinate = 3-dehydroshikimate + H2O. The protein operates within metabolic intermediate biosynthesis; chorismate biosynthesis; chorismate from D-erythrose 4-phosphate and phosphoenolpyruvate: step 3/7. Functionally, involved in the third step of the chorismate pathway, which leads to the biosynthesis of aromatic amino acids. Catalyzes the cis-dehydration of 3-dehydroquinate (DHQ) and introduces the first double bond of the aromatic ring to yield 3-dehydroshikimate. The chain is 3-dehydroquinate dehydratase from Geobacillus thermodenitrificans (strain NG80-2).